Reading from the N-terminus, the 86-residue chain is Small ribosomal subunit protein bS20 (86 aa).

The protein belongs to the bacterial ribosomal protein bS20 family.

Binds directly to 16S ribosomal RNA. This Aliarcobacter butzleri (strain RM4018) (Arcobacter butzleri) protein is Small ribosomal subunit protein bS20.